The primary structure comprises 274 residues: Large ribosomal subunit protein uL2 (274 aa).

Disordered regions lie at residues 38–57 (KRTGGRNNNGHITTRHVGGG) and 224–256 (AMNPIDHPHGGGEGRNKGIQPVSPWGQKAKGYK). The segment covering 229-239 (DHPHGGGEGRN) has biased composition (basic and acidic residues).

This sequence belongs to the universal ribosomal protein uL2 family. As to quaternary structure, part of the 50S ribosomal subunit. Forms a bridge to the 30S subunit in the 70S ribosome.

In terms of biological role, one of the primary rRNA binding proteins. Required for association of the 30S and 50S subunits to form the 70S ribosome, for tRNA binding and peptide bond formation. It has been suggested to have peptidyltransferase activity; this is somewhat controversial. Makes several contacts with the 16S rRNA in the 70S ribosome. In Acinetobacter baumannii (strain AB307-0294), this protein is Large ribosomal subunit protein uL2.